The sequence spans 334 residues: DNA-directed RNA polymerase subunit alpha (334 aa).

The segment at 1–231 (MQSNTFLTPR…EQLSVFADLK (231 aa)) is alpha N-terminal domain (alpha-NTD). Residues 245-334 (IDPVLLRPVD…GKKDTSHAAP (90 aa)) are alpha C-terminal domain (alpha-CTD).

The protein belongs to the RNA polymerase alpha chain family. As to quaternary structure, homodimer. The RNAP catalytic core consists of 2 alpha, 1 beta, 1 beta' and 1 omega subunit. When a sigma factor is associated with the core the holoenzyme is formed, which can initiate transcription.

It catalyses the reaction RNA(n) + a ribonucleoside 5'-triphosphate = RNA(n+1) + diphosphate. Functionally, DNA-dependent RNA polymerase catalyzes the transcription of DNA into RNA using the four ribonucleoside triphosphates as substrates. The sequence is that of DNA-directed RNA polymerase subunit alpha from Nitrosospira multiformis (strain ATCC 25196 / NCIMB 11849 / C 71).